The following is a 376-amino-acid chain: Putative glutamate--cysteine ligase 2 (376 aa).

The protein belongs to the glutamate--cysteine ligase type 2 family. YbdK subfamily.

It catalyses the reaction L-cysteine + L-glutamate + ATP = gamma-L-glutamyl-L-cysteine + ADP + phosphate + H(+). ATP-dependent carboxylate-amine ligase which exhibits weak glutamate--cysteine ligase activity. This chain is Putative glutamate--cysteine ligase 2, found in Paracoccus denitrificans (strain Pd 1222).